The sequence spans 64 residues: GRDAYIADSENCTYFCGSNPYCNDVCTENGAKSGYCQWAGRYGNACYCIDLPASERIKEPGKCG.

The LCN-type CS-alpha/beta domain occupies 2–64 (RDAYIADSEN…ERIKEPGKCG (63 aa)). 4 cysteine pairs are disulfide-bonded: Cys-12–Cys-63, Cys-16–Cys-36, Cys-22–Cys-46, and Cys-26–Cys-48.

Belongs to the long (4 C-C) scorpion toxin superfamily. Sodium channel inhibitor family. Alpha subfamily. Expressed by the venom gland.

It localises to the secreted. Its function is as follows. Alpha toxins bind voltage-independently at site-3 of sodium channels (Nav) and inhibit the inactivation of the activated channels, thereby blocking neuronal transmission. This acidic toxin has a weak toxicity and is active against mammals. The polypeptide is Alpha-mammal toxin BmK-M8 (Olivierus martensii (Manchurian scorpion)).